A 656-amino-acid chain; its full sequence is Replication protein A 70 kDa DNA-binding subunit A (656 aa).

A DNA-binding region (OB) is located at residues 225–307 (AIKARVTAKG…NHLNNEWEIL (83 aa)). The segment at 516 to 542 (CPNMIGDRQCNKKVTKSTNGNWTCDKC) adopts a C4-type zinc-finger fold.

The protein belongs to the replication factor A protein 1 family. As to quaternary structure, heterotrimer of RPA1, RPA2 and RPA3 (canonical replication protein A complex). Interacts with RPA2B. In terms of tissue distribution, expressed in root tips, roots, shoot apical meristem (SAM), young leaves, flag leaves and ears, and at lower levels in mature leaves.

The protein localises to the nucleus. In terms of biological role, component of the replication protein A complex (RPA) required for DNA recombination, repair and replication. The activity of RPA is mediated by single-stranded DNA binding and protein interactions. Plays an essential role in meiotic and somatic DNA repair, but is dispensable for DNA replication and homologous recombination. Is essential for normal progression through meiosis in pollen mother cells. Is involved in repair of double-strand DNA breaks (DSBs) induced by genotoxic stresses. The protein is Replication protein A 70 kDa DNA-binding subunit A (RPA1A) of Oryza sativa subsp. japonica (Rice).